Reading from the N-terminus, the 450-residue chain is Glucose-6-phosphate isomerase (450 aa).

Residue Glu-291 is the Proton donor of the active site. Residues His-312 and Lys-426 contribute to the active site.

This sequence belongs to the GPI family.

The protein localises to the cytoplasm. It carries out the reaction alpha-D-glucose 6-phosphate = beta-D-fructose 6-phosphate. The protein operates within carbohydrate biosynthesis; gluconeogenesis. It functions in the pathway carbohydrate degradation; glycolysis; D-glyceraldehyde 3-phosphate and glycerone phosphate from D-glucose: step 2/4. Catalyzes the reversible isomerization of glucose-6-phosphate to fructose-6-phosphate. The polypeptide is Glucose-6-phosphate isomerase (Clostridium botulinum (strain Langeland / NCTC 10281 / Type F)).